The following is a 628-amino-acid chain: Serine/threonine-protein phosphatase 2A regulatory subunit psrA (628 aa).

The span at 1–22 shows a compositional bias: polar residues; the sequence is MKNDHINYQQNLSQSPILNSNK. Disordered regions lie at residues 1 to 61, 500 to 558, and 577 to 628; these read MKND…QIPF, KKKQ…DKPS, and SSHR…YTFT. Low complexity-rich tracts occupy residues 23–58 and 524–547; these read NQTQ…SPQQ and QINQ…NNNN. Over residues 600-618 the composition is skewed to basic and acidic residues; it reads NNHTNHDSEIENEVKEDFR.

The protein belongs to the phosphatase 2A regulatory subunit B56 family. In terms of assembly, PP2A consists of a trimeric holoenzyme, composed of a 37 kDa catalytic subunit (C subunit) and a 65 kDa constant regulatory subunit (A subunit), that associates with a variety of regulatory subunits (B subunit) such as phr2AB (B55) and psrA (B56 homolog). The trimer may partially dissociates into a core 'AC' dimer equally active compared to the trimer. Seems to play a role in proper anterior patterning (pstO and pstAB).

It localises to the cytoplasm. The protein resides in the cytosol. Its function is as follows. Involved in developmental cell fate decision. The protein is Serine/threonine-protein phosphatase 2A regulatory subunit psrA (psrA) of Dictyostelium discoideum (Social amoeba).